We begin with the raw amino-acid sequence, 5641 residues long: Cyclochlorotine synthetase (5641 aa).

The segment at 95–124 is disordered; that stretch reads PENLNGHLIGSTNGHKKQWENDSADDKRGQ. The span at 111 to 124 shows a compositional bias: basic and acidic residues; it reads KQWENDSADDKRGQ. Positions 217–622 are adenylation (A) domain 1; the sequence is FTENVQRYPT…GRRDTQVKIR (406 aa). Residues 816-892 form the Carrier 1 domain; that stretch reads TEEEYKIQTL…DLVSNCKMSA (77 aa). The tract at residues 821–889 is thiolation (T) domain 1; it reads KIQTLKEIWS…QLSDLVSNCK (69 aa). An O-(pantetheine 4'-phosphoryl)serine modification is found at Ser-853. The interval 926–1333 is condensation (C) domain 1; it reads EDVYPCTPLQ…AHVAEQIGQP (408 aa). Residues 1390–1768 form an adenylation (A) domain 2 region; the sequence is DGNLTFEELN…ISRATTQIKI (379 aa). Residues 1902–1978 form the Carrier 2 domain; that stretch reads IELSEKQENM…QLVMIATELT (77 aa). The thiolation (T) domain 2 stretch occupies residues 1907–1975; the sequence is KQENMARLWA…RFDQLVMIAT (69 aa). Ser-1939 carries the post-translational modification O-(pantetheine 4'-phosphoryl)serine. A condensation (C) domain 2 region spans residues 2022–2438; it reads DIYACTPFQE…DLASEQDLAK (417 aa). The segment at 2459 to 2859 is adenylation (A) domain 3; that stretch reads AEKARQHPNK…GRADTQVKLR (401 aa). Residues 2976–3052 enclose the Carrier 3 domain; it reads GPLTEMETTL…GMAIKIQPIH (77 aa). Positions 2977–3049 are thiolation (T) domain 3; that stretch reads PLTEMETTLA…NLAGMAIKIQ (73 aa). O-(pantetheine 4'-phosphoryl)serine is present on Ser-3013. Residues 3089-3482 are condensation (C) domain 3; it reads DIYPCTPLQV…LETVLSAFST (394 aa). Residues 3523–3873 are adenylation (A) domain 4; sequence VQRAPDKVAI…IARKDLQVKL (351 aa). Residues 4005–4081 enclose the Carrier 4 domain; sequence IPSTPTEMKM…ELATKIAPRI (77 aa). The tract at residues 4010-4078 is thiolation (T) domain 4; it reads TEMKMQQLWA…RLSELATKIA (69 aa). Ser-4042 carries the O-(pantetheine 4'-phosphoryl)serine modification. Positions 4123-4549 are condensation (C) domain 4; that stretch reads KDVYPCTPLQ…QSLDSLSQQD (427 aa). Residues 4574–4982 are adenylation (A) domain 5; that stretch reads QEIAGRHPDA…GRIGTDIKLR (409 aa). Positions 5118 to 5194 constitute a Carrier 5 domain; it reads PPSTQEEKVI…SLAEKISWES (77 aa). Residues 5123–5191 are thiolation (T) domain 5; sequence EEKVIAALWA…KLASLAEKIS (69 aa). An O-(pantetheine 4'-phosphoryl)serine modification is found at Ser-5155. Residues 5260–5556 are condensation (C) domain 5; it reads AYLDIGPDVQ…DKCTTCVSGS (297 aa).

The protein belongs to the NRP synthetase family.

The protein operates within mycotoxin biosynthesis. Functionally, nonribosomal peptide synthetase; part of the gene cluster that mediates the biosynthesis of the mycotoxin cyclochlorotine, a hepatotoxic and carcinogenic cyclic chlorinated pentapeptide. Within the pathway, The NRPS cctN initially catalyzes the condensation of L-serine (Ser), Pro, L-2-aminobutyrate (2Abu), Ser, and beta-Phe in this order. During the chain elongation, side-chain hydroxy group of Ser4 would be used as a nucleophile, giving isocyclotine as a product of terminal condensation-like (CT) domain-catalyzed cyclization. After the dichlorination of Pro2 catalyzed by cctP2 to produce isocyclochlorotine, the cctO-mediated transacylation of isocyclochlorotine can furnish cyclochlorotine. The subsequent hydroxylation of cyclochlorotine by cctR yields hydroxycyclochlorotine as the final product. CctP1 probably acts as a phenylalanine aminomutase and provides the uncommon building block beta-Phe. Furthermore, 2Abu can be synthesized from threonine by one of the threonine dehydratases and transaminases localized outside of the cluster. The functions of the remaining proteins encoded by the cluster, cctM and cctT, have not been identified yet. The protein is Cyclochlorotine synthetase of Talaromyces islandicus (Penicillium islandicum).